The primary structure comprises 106 residues: Large ribosomal subunit protein bL31B (106 aa).

The interval 85-106 (PVQVAEEPVAKGKKKPSLKKKK) is disordered. Basic residues predominate over residues 95–106 (KGKKKPSLKKKK).

This sequence belongs to the bacterial ribosomal protein bL31 family. Type B subfamily. As to quaternary structure, part of the 50S ribosomal subunit.

This Chlamydia felis (strain Fe/C-56) (Chlamydophila felis) protein is Large ribosomal subunit protein bL31B.